Consider the following 143-residue polypeptide: Ribonuclease P protein component 2 (143 aa).

It belongs to the eukaryotic/archaeal RNase P protein component 2 family. As to quaternary structure, consists of a catalytic RNA component and at least 4-5 protein subunits.

The protein resides in the cytoplasm. The catalysed reaction is Endonucleolytic cleavage of RNA, removing 5'-extranucleotides from tRNA precursor.. Its function is as follows. Part of ribonuclease P, a protein complex that generates mature tRNA molecules by cleaving their 5'-ends. This is Ribonuclease P protein component 2 from Saccharolobus islandicus (strain L.S.2.15 / Lassen #1) (Sulfolobus islandicus).